The sequence spans 470 residues: Uronate isomerase (470 aa).

Belongs to the metallo-dependent hydrolases superfamily. Uronate isomerase family.

The catalysed reaction is D-glucuronate = D-fructuronate. It carries out the reaction aldehydo-D-galacturonate = keto-D-tagaturonate. Its pathway is carbohydrate metabolism; pentose and glucuronate interconversion. The sequence is that of Uronate isomerase from Cutibacterium acnes (strain DSM 16379 / KPA171202) (Propionibacterium acnes).